The primary structure comprises 42 residues: Photosystem I reaction center subunit IX (42 aa).

The helical transmembrane segment at 7–27 (FLSTAPVLIMALLTVTAGILI) threads the bilayer.

This sequence belongs to the PsaJ family.

Its subcellular location is the cellular thylakoid membrane. Its function is as follows. May help in the organization of the PsaE and PsaF subunits. This is Photosystem I reaction center subunit IX from Crocosphaera subtropica (strain ATCC 51142 / BH68) (Cyanothece sp. (strain ATCC 51142)).